Consider the following 321-residue polypeptide: Probable arabinan endo-1,5-alpha-L-arabinosidase A (321 aa).

The first 19 residues, Met1–Gly19, serve as a signal peptide directing secretion. Residue Asp34 is the Proton acceptor of the active site. The active-site Proton donor is Glu200.

Belongs to the glycosyl hydrolase 43 family.

It localises to the secreted. It carries out the reaction Endohydrolysis of (1-&gt;5)-alpha-arabinofuranosidic linkages in (1-&gt;5)-arabinans.. It participates in glycan metabolism; L-arabinan degradation. Endo-1,5-alpha-L-arabinanase involved in degradation of pectin. Its preferred substrate is linear 1,5-alpha-L-arabinan. This Neosartorya fischeri (strain ATCC 1020 / DSM 3700 / CBS 544.65 / FGSC A1164 / JCM 1740 / NRRL 181 / WB 181) (Aspergillus fischerianus) protein is Probable arabinan endo-1,5-alpha-L-arabinosidase A (abnA).